The primary structure comprises 432 residues: 3-phosphoshikimate 1-carboxyvinyltransferase (432 aa).

Residues lysine 23, serine 24, and arginine 28 each coordinate 3-phosphoshikimate. Phosphoenolpyruvate is bound at residue lysine 23. Phosphoenolpyruvate-binding residues include glycine 95 and arginine 123. 3-phosphoshikimate-binding residues include serine 167, glutamine 169, aspartate 317, and lysine 344. Glutamine 169 is a phosphoenolpyruvate binding site. Catalysis depends on aspartate 317, which acts as the Proton acceptor. Phosphoenolpyruvate contacts are provided by arginine 348 and arginine 390.

The protein belongs to the EPSP synthase family. In terms of assembly, monomer.

The protein localises to the cytoplasm. It carries out the reaction 3-phosphoshikimate + phosphoenolpyruvate = 5-O-(1-carboxyvinyl)-3-phosphoshikimate + phosphate. It participates in metabolic intermediate biosynthesis; chorismate biosynthesis; chorismate from D-erythrose 4-phosphate and phosphoenolpyruvate: step 6/7. Catalyzes the transfer of the enolpyruvyl moiety of phosphoenolpyruvate (PEP) to the 5-hydroxyl of shikimate-3-phosphate (S3P) to produce enolpyruvyl shikimate-3-phosphate and inorganic phosphate. This chain is 3-phosphoshikimate 1-carboxyvinyltransferase, found in Staphylococcus aureus (strain Newman).